The primary structure comprises 373 residues: Dual-specificity RNA methyltransferase RlmN (373 aa).

The active-site Proton acceptor is the glutamate 94. The Radical SAM core domain occupies 100-339 (EDDRATLCVS…VIVRKTRGDD (240 aa)). Cysteine 107 and cysteine 344 are disulfide-bonded. Positions 114, 118, and 121 each coordinate [4Fe-4S] cluster. Residues 168–169 (GE), serine 200, 222–224 (SIH), and asparagine 301 each bind S-adenosyl-L-methionine. Residue cysteine 344 is the S-methylcysteine intermediate of the active site.

Belongs to the radical SAM superfamily. RlmN family. It depends on [4Fe-4S] cluster as a cofactor.

Its subcellular location is the cytoplasm. The enzyme catalyses adenosine(2503) in 23S rRNA + 2 reduced [2Fe-2S]-[ferredoxin] + 2 S-adenosyl-L-methionine = 2-methyladenosine(2503) in 23S rRNA + 5'-deoxyadenosine + L-methionine + 2 oxidized [2Fe-2S]-[ferredoxin] + S-adenosyl-L-homocysteine. The catalysed reaction is adenosine(37) in tRNA + 2 reduced [2Fe-2S]-[ferredoxin] + 2 S-adenosyl-L-methionine = 2-methyladenosine(37) in tRNA + 5'-deoxyadenosine + L-methionine + 2 oxidized [2Fe-2S]-[ferredoxin] + S-adenosyl-L-homocysteine. In terms of biological role, specifically methylates position 2 of adenine 2503 in 23S rRNA and position 2 of adenine 37 in tRNAs. m2A2503 modification seems to play a crucial role in the proofreading step occurring at the peptidyl transferase center and thus would serve to optimize ribosomal fidelity. The sequence is that of Dual-specificity RNA methyltransferase RlmN from Shewanella sp. (strain MR-4).